Here is a 211-residue protein sequence, read N- to C-terminus: Ubiquitin-conjugating enzyme E2 S (211 aa).

One can recognise a UBC core domain in the interval 11–157 (HIIRQVYKEV…ARLMTEIHAQ (147 aa)). The Glycyl thioester intermediate role is filled by C95. Residues 157 to 211 (QGSSLRGKDPTDPCSSASATLVSGDGPMAKKHAGDRDKKLAAKKKTDKKRALRRL) form a disordered region. Over residues 197-211 (AAKKKTDKKRALRRL) the composition is skewed to basic residues.

It belongs to the ubiquitin-conjugating enzyme family.

The enzyme catalyses S-ubiquitinyl-[E1 ubiquitin-activating enzyme]-L-cysteine + [E2 ubiquitin-conjugating enzyme]-L-cysteine = [E1 ubiquitin-activating enzyme]-L-cysteine + S-ubiquitinyl-[E2 ubiquitin-conjugating enzyme]-L-cysteine.. It functions in the pathway protein modification; protein ubiquitination. In terms of biological role, catalyzes the covalent attachment of ubiquitin to other proteins. Acts as an essential factor of the anaphase promoting complex/cyclosome (APC/C), a cell cycle-regulated ubiquitin ligase that controls progression through mitosis. Acts by specifically elongating 'Lys-11'-linked polyubiquitin chains initiated by the E2 enzyme ube2c/ubch10 on APC/C substrates, enhancing the degradation of APC/C substrates by the proteasome and promoting mitotic exit. This chain is Ubiquitin-conjugating enzyme E2 S (ube2s), found in Xenopus tropicalis (Western clawed frog).